A 699-amino-acid chain; its full sequence is Polyribonucleotide nucleotidyltransferase (699 aa).

Residues aspartate 485 and aspartate 491 each contribute to the Mg(2+) site. In terms of domain architecture, KH spans 552–611 (PRITTIKINPEKIRDVIGKGGAVIRALTEETGTTIELEDDGTVKIASSNGDATREAIRRI). The S1 motif domain occupies 621–689 (GRIYNGKVIR…RQGRVRLSIK (69 aa)).

The protein belongs to the polyribonucleotide nucleotidyltransferase family. In terms of assembly, component of the RNA degradosome, which is a multiprotein complex involved in RNA processing and mRNA degradation. Requires Mg(2+) as cofactor.

Its subcellular location is the cytoplasm. The enzyme catalyses RNA(n+1) + phosphate = RNA(n) + a ribonucleoside 5'-diphosphate. In terms of biological role, involved in mRNA degradation. Catalyzes the phosphorolysis of single-stranded polyribonucleotides processively in the 3'- to 5'-direction. This chain is Polyribonucleotide nucleotidyltransferase, found in Shewanella sp. (strain ANA-3).